The following is a 347-amino-acid chain: Hyaluronidase conohyal-ad1 (347 aa).

Positions 1 to 18 (MRAVVVVTGLVVVVVTTT) are cleaved as a signal peptide. A propeptide spanning residues 19-33 (LSLQDHDVKSASSPL) is cleaved from the precursor. Positions 27–49 (KSASSPLSSSVDQGSSGDDCDEG) are disordered. Residues 28–43 (SASSPLSSSVDQGSSG) are compositionally biased toward low complexity. Cys-67 and Cys-343 are oxidised to a cystine. Glu-150 functions as the Proton donor in the catalytic mechanism.

This sequence belongs to the glycosyl hydrolase 56 family. Contains 4 disulfide bonds. In terms of processing, is N-linked glycosylated at three positions. Expressed by the venom duct.

It localises to the secreted. The catalysed reaction is Random hydrolysis of (1-&gt;4)-linkages between N-acetyl-beta-D-glucosamine and D-glucuronate residues in hyaluronate.. Its function is as follows. Hyaluronidase catalyzes the hydrolysis of hyaluronic acid (HA), an anionic, nonsulfated glycosaminoglycan distributed widely throughout connective, epithelial, and neural tissues. In venom, they are known to enhance diffusion of the venom by degrading the extracellular matrix. The chain is Hyaluronidase conohyal-ad1 from Conus adamsonii (Rhododendron cone).